A 241-amino-acid chain; its full sequence is tRNA pseudouridine synthase B (241 aa).

Catalysis depends on aspartate 45, which acts as the Nucleophile.

It belongs to the pseudouridine synthase TruB family. Type 1 subfamily.

The enzyme catalyses uridine(55) in tRNA = pseudouridine(55) in tRNA. Its function is as follows. Responsible for synthesis of pseudouridine from uracil-55 in the psi GC loop of transfer RNAs. The sequence is that of tRNA pseudouridine synthase B from Chlamydia trachomatis serovar L2 (strain ATCC VR-902B / DSM 19102 / 434/Bu).